A 191-amino-acid chain; its full sequence is FAD-linked sulfhydryl oxidase ERV1 (191 aa).

An ERV/ALR sulfhydryl oxidase domain is found at 72 to 172 (GPVTKEDLGR…FPCERVDARW (101 aa)). 11 residues coordinate FAD: K76, R81, W84, E121, H125, C148, H151, N152, N155, K160, and R171. An intrachain disulfide couples C119 to C122. Residues C148 and C165 are joined by a disulfide bond. A disulfide bond links C177 and C182. The short motif at 177–182 (CEQKSC) is the Required for dimerization and substrate specificity element.

In terms of assembly, homodimer. FAD is required as a cofactor. In terms of processing, contains three disulfide bonds; one catalytic disulfide (Cys-119 to Cys-122), one structural disulfide (Cys-148 to Cys-165), and one shuttle disulfide (Cys-177 to Cys-182).

Its subcellular location is the mitochondrion. The catalysed reaction is 2 R'C(R)SH + O2 = R'C(R)S-S(R)CR' + H2O2. Functionally, FAD-dependent sulfhydryl oxidase that catalyzes disulfide bond formation. Oxidizes thioredoxin in vitro. Required for the import and folding of small cysteine-containing proteins in the mitochondrial intermembrane space, and can act independently of the oxidoreductase MIA40. Can oxidize the cytochrome c oxidase assembly protein COX19, a typical substrate of MIA40. This chain is FAD-linked sulfhydryl oxidase ERV1 (ERV1), found in Arabidopsis thaliana (Mouse-ear cress).